The chain runs to 358 residues: UPF0324 membrane protein CT0845 (358 aa).

A run of 10 helical transmembrane segments spans residues 36–53 (YFPG…ATFL), 57–76 (YGAP…RFLS), 83–105 (LVGI…GMRI), 115–134 (VKPV…FGLA), 146–168 (GVLT…AAVL), 178–200 (TIFT…PVVA), 244–261 (LLRV…SLIF), 276–295 (LLPP…SLGV), 307–325 (VSRW…KTSL), and 335–357 (PVSI…VVWM).

The protein belongs to the UPF0324 family.

The protein resides in the cell membrane. In Chlorobaculum tepidum (strain ATCC 49652 / DSM 12025 / NBRC 103806 / TLS) (Chlorobium tepidum), this protein is UPF0324 membrane protein CT0845.